The primary structure comprises 650 residues: Acetyl-coenzyme A synthetase (650 aa).

CoA-binding positions include 191–194, T311, and N335; that span reads RGGR. Residues 387–389, 411–416, D500, and R515 each bind ATP; these read GEP and DTWWQT. S523 lines the CoA pocket. R526 provides a ligand contact to ATP. V537, H539, and V542 together coordinate Mg(2+). R584 provides a ligand contact to CoA. At K609 the chain carries N6-acetyllysine.

The protein belongs to the ATP-dependent AMP-binding enzyme family. It depends on Mg(2+) as a cofactor. Post-translationally, acetylated. Deacetylation by the SIR2-homolog deacetylase activates the enzyme.

The enzyme catalyses acetate + ATP + CoA = acetyl-CoA + AMP + diphosphate. Functionally, catalyzes the conversion of acetate into acetyl-CoA (AcCoA), an essential intermediate at the junction of anabolic and catabolic pathways. AcsA undergoes a two-step reaction. In the first half reaction, AcsA combines acetate with ATP to form acetyl-adenylate (AcAMP) intermediate. In the second half reaction, it can then transfer the acetyl group from AcAMP to the sulfhydryl group of CoA, forming the product AcCoA. The protein is Acetyl-coenzyme A synthetase of Shewanella baltica (strain OS195).